The primary structure comprises 376 residues: MTDFPTLPSEFIPGDGRFGCGPSKVRPEQIQAIVDGSASVIGTSHRQPAVKNVVGSIREGLSDLFSLPEGYEIILSLGGATAFWDAATFGLIEKKSGHLSFGEFSSKFAKASKLAPWLYEPEIVTAETGDAPAPQAFEGADVIAWAHNETSTGAMVPVLRPEGSEGSLVAIDATSGAGGLPVDIKNSDVYYFSPQKCFASDGGLWLAAMSPAALERIEKINASDRFIPEFLNLQTAVDNSLKNQTYNTPAVATLLMLDNQVKWMNSNGGLDGMVARTTASSSALYNWAEAREEASPYVADAAKRSLVVGTIDFDDSIDAAVIAKILRANGILDTEPYRKLGRNQLRIGMFPAIDSTDVEKLTGAIDFILDGGFAKK.

Arginine 46 provides a ligand contact to L-glutamate. Residues 80–81 (AT), phenylalanine 104, threonine 150, aspartate 172, and glutamine 195 each bind pyridoxal 5'-phosphate. An N6-(pyridoxal phosphate)lysine modification is found at lysine 196. A pyridoxal 5'-phosphate-binding site is contributed by 247 to 248 (NT).

This sequence belongs to the class-V pyridoxal-phosphate-dependent aminotransferase family. SerC subfamily. As to quaternary structure, homodimer. It depends on pyridoxal 5'-phosphate as a cofactor.

The protein resides in the cytoplasm. The enzyme catalyses O-phospho-L-serine + 2-oxoglutarate = 3-phosphooxypyruvate + L-glutamate. The catalysed reaction is 4-(phosphooxy)-L-threonine + 2-oxoglutarate = (R)-3-hydroxy-2-oxo-4-phosphooxybutanoate + L-glutamate. It functions in the pathway amino-acid biosynthesis; L-serine biosynthesis; L-serine from 3-phospho-D-glycerate: step 2/3. The protein operates within cofactor biosynthesis; pyridoxine 5'-phosphate biosynthesis; pyridoxine 5'-phosphate from D-erythrose 4-phosphate: step 3/5. Catalyzes the reversible conversion of 3-phosphohydroxypyruvate to phosphoserine and of 3-hydroxy-2-oxo-4-phosphonooxybutanoate to phosphohydroxythreonine. This is Phosphoserine aminotransferase from Corynebacterium glutamicum (strain R).